Reading from the N-terminus, the 427-residue chain is Arginine biosynthesis bifunctional protein ArgJ (427 aa).

Residues Thr174, Lys200, Thr211, Glu291, Asn422, and Thr427 each contribute to the substrate site. Catalysis depends on Thr211, which acts as the Nucleophile.

This sequence belongs to the ArgJ family. In terms of assembly, heterotetramer of two alpha and two beta chains.

It localises to the cytoplasm. The enzyme catalyses N(2)-acetyl-L-ornithine + L-glutamate = N-acetyl-L-glutamate + L-ornithine. It carries out the reaction L-glutamate + acetyl-CoA = N-acetyl-L-glutamate + CoA + H(+). Its pathway is amino-acid biosynthesis; L-arginine biosynthesis; L-ornithine and N-acetyl-L-glutamate from L-glutamate and N(2)-acetyl-L-ornithine (cyclic): step 1/1. It functions in the pathway amino-acid biosynthesis; L-arginine biosynthesis; N(2)-acetyl-L-ornithine from L-glutamate: step 1/4. Catalyzes two activities which are involved in the cyclic version of arginine biosynthesis: the synthesis of N-acetylglutamate from glutamate and acetyl-CoA as the acetyl donor, and of ornithine by transacetylation between N(2)-acetylornithine and glutamate. In Prochlorococcus marinus (strain MIT 9313), this protein is Arginine biosynthesis bifunctional protein ArgJ.